The following is a 571-amino-acid chain: MRVSKYLLSTQKETPANAEVISHQLMLRAGMIRRNASGLYSYLPTGLRVLRKVEAIVREEMNKAGAIEILMPMVQPADLWVETGRWEKFGPELLRFKDRHNRDFVLGPTHEEVITDLIRKEVSSYKQLPLNLYQIQTKFRDEVRPRFGMMRSREFLMKDAYSFHLDVDTMNETYEAMYNAYSNILTRMGLAFRPVLADTGSIGGSMSHEFHVLAQSGEDLIAYSTGSDYAANIEKAESPVPTEPRGAATEELRLVDTPNAKTIAELVEQFDLDITKTVKTLIVVGASEATPLVALIVRGDHELNEVKADKLDLVASPVEMASEALIRDAIGAGPGSLGPIGLNIPIVIDHSVSVMSDFAAGANVDDKHYFGINWERDLPTAQVADIRNVVEGEPTPDGLGTYAMARGIEVGHIFQLGTNYSKSMNATVLDENGKSQVLLMGCYGVGVSRIVAAAIEQNFDDRGIIWPEAIAPFSVGILPMNMHKSHRVTDIAEQLYKDLNEAGIDVLLDDRKERPGVMFADMELIGIPHTVVIGDRNIDAGVFEYKNRRTGEKQDIPFDQLLDFLKNAVKG.

It belongs to the class-II aminoacyl-tRNA synthetase family. ProS type 1 subfamily. Homodimer.

It is found in the cytoplasm. It carries out the reaction tRNA(Pro) + L-proline + ATP = L-prolyl-tRNA(Pro) + AMP + diphosphate. Its function is as follows. Catalyzes the attachment of proline to tRNA(Pro) in a two-step reaction: proline is first activated by ATP to form Pro-AMP and then transferred to the acceptor end of tRNA(Pro). As ProRS can inadvertently accommodate and process non-cognate amino acids such as alanine and cysteine, to avoid such errors it has two additional distinct editing activities against alanine. One activity is designated as 'pretransfer' editing and involves the tRNA(Pro)-independent hydrolysis of activated Ala-AMP. The other activity is designated 'posttransfer' editing and involves deacylation of mischarged Ala-tRNA(Pro). The misacylated Cys-tRNA(Pro) is not edited by ProRS. This is Proline--tRNA ligase from Shewanella baltica (strain OS185).